Consider the following 491-residue polypeptide: Acetyl-coenzyme A carboxylase carboxyl transferase subunit beta, chloroplastic (491 aa).

One can recognise a CoA carboxyltransferase N-terminal domain in the interval 229-491 (LWVQCENCYG…FQLHGFFPLT (263 aa)). The Zn(2+) site is built by Cys233, Cys236, Cys252, and Cys255. The C4-type zinc-finger motif lies at 233–255 (CENCYGLNYKQFFRSRLNICEHC).

This sequence belongs to the AccD/PCCB family. As to quaternary structure, acetyl-CoA carboxylase is a heterohexamer composed of biotin carboxyl carrier protein, biotin carboxylase and 2 subunits each of ACCase subunit alpha and ACCase plastid-coded subunit beta (accD). Zn(2+) serves as cofactor.

It localises to the plastid. It is found in the chloroplast stroma. The enzyme catalyses N(6)-carboxybiotinyl-L-lysyl-[protein] + acetyl-CoA = N(6)-biotinyl-L-lysyl-[protein] + malonyl-CoA. The protein operates within lipid metabolism; malonyl-CoA biosynthesis; malonyl-CoA from acetyl-CoA: step 1/1. In terms of biological role, component of the acetyl coenzyme A carboxylase (ACC) complex. Biotin carboxylase (BC) catalyzes the carboxylation of biotin on its carrier protein (BCCP) and then the CO(2) group is transferred by the transcarboxylase to acetyl-CoA to form malonyl-CoA. In Lemna minor (Common duckweed), this protein is Acetyl-coenzyme A carboxylase carboxyl transferase subunit beta, chloroplastic.